The chain runs to 244 residues: Small ribosomal subunit protein uS2 (244 aa).

The protein belongs to the universal ribosomal protein uS2 family.

In Exiguobacterium sibiricum (strain DSM 17290 / CCUG 55495 / CIP 109462 / JCM 13490 / 255-15), this protein is Small ribosomal subunit protein uS2.